The sequence spans 134 residues: Complexin-1 (134 aa).

Disordered regions lie at residues M1–E60 and K74–D113. Over residues D15–E60 the composition is skewed to basic and acidic residues. Residues D29 to K69 adopt a coiled-coil conformation. The tract at residues R48–Y70 is interaction with the SNARE complex.

Belongs to the complexin/synaphin family. In terms of assembly, binds to the SNARE core complex containing SNAP25, VAMP2 and STX1A. As to expression, nervous system. In hippocampus and cerebellum, expressed mainly by inhibitory neurons. Overexpressed in substantia nigra from patients with Parkinson disease.

The protein localises to the cytoplasm. The protein resides in the cytosol. It localises to the perikaryon. It is found in the presynapse. Functionally, positively regulates a late step in exocytosis of various cytoplasmic vesicles, such as synaptic vesicles and other secretory vesicles. Organizes the SNAREs into a cross-linked zigzag topology that, when interposed between the vesicle and plasma membranes, is incompatible with fusion, thereby preventing SNAREs from releasing neurotransmitters until an action potential arrives at the synapse. Also involved in glucose-induced secretion of insulin by pancreatic beta-cells. Essential for motor behavior. In Homo sapiens (Human), this protein is Complexin-1 (CPLX1).